Here is a 297-residue protein sequence, read N- to C-terminus: Undecaprenyl-diphosphatase (297 aa).

The next 7 helical transmembrane spans lie at 58-78 (PGVA…LSYF), 103-123 (AQMG…GLLI), 138-158 (LAAI…AEQL), 168-188 (LRLA…IPGV), 208-228 (AARF…LVEL), 243-263 (VLAI…AWLL), and 274-294 (FVVY…TGTL).

The protein belongs to the UppP family.

Its subcellular location is the cell inner membrane. The catalysed reaction is di-trans,octa-cis-undecaprenyl diphosphate + H2O = di-trans,octa-cis-undecaprenyl phosphate + phosphate + H(+). Functionally, catalyzes the dephosphorylation of undecaprenyl diphosphate (UPP). Confers resistance to bacitracin. The sequence is that of Undecaprenyl-diphosphatase from Synechococcus sp. (strain ATCC 27144 / PCC 6301 / SAUG 1402/1) (Anacystis nidulans).